Consider the following 95-residue polypeptide: Sec-independent protein translocase protein TatA (95 aa).

The chain crosses the membrane as a helical span at residues 1-21 (MGSMSVWHWVIVAVVVMLLFG). Positions 42 to 95 (GMADDETQPNTATSVPPVGPNDPVRTLPHQGAPGTAPQPPHVQPHVSAGDHKAV) are disordered.

It belongs to the TatA/E family. In terms of assembly, the Tat system comprises two distinct complexes: a TatABC complex, containing multiple copies of TatA, TatB and TatC subunits, and a separate TatA complex, containing only TatA subunits. Substrates initially bind to the TatABC complex, which probably triggers association of the separate TatA complex to form the active translocon.

The protein localises to the cell inner membrane. Functionally, part of the twin-arginine translocation (Tat) system that transports large folded proteins containing a characteristic twin-arginine motif in their signal peptide across membranes. TatA could form the protein-conducting channel of the Tat system. This is Sec-independent protein translocase protein TatA from Methylorubrum extorquens (strain CM4 / NCIMB 13688) (Methylobacterium extorquens).